The chain runs to 223 residues: Twisted gastrulation protein homolog 1 (223 aa).

A signal peptide spans 1–25 (MKLHYVAVLTLAILMFLTWLPASLS). Asparagine 52 and asparagine 81 each carry an N-linked (GlcNAc...) asparagine glycan.

The protein belongs to the twisted gastrulation protein family. As to quaternary structure, interacts with CHRD and BMP4. This interaction enhances CHRD/BMP4 complex formation. Interacts with BMP7.

The protein resides in the secreted. Functionally, may be involved in dorsoventral axis formation. Seems to antagonize BMP signaling by forming ternary complexes with CHRD and BMPs, thereby preventing BMPs from binding to their receptors. In addition to the anti-BMP function, also has pro-BMP activity, partly mediated by cleavage and degradation of CHRD, which releases BMPs from ternary complexes. May be an important modulator of BMP-regulated cartilage development and chondrocyte differentiation. May play a role in thymocyte development. The sequence is that of Twisted gastrulation protein homolog 1 (TWSG1) from Pongo abelii (Sumatran orangutan).